Reading from the N-terminus, the 287-residue chain is Shikimate dehydrogenase (NADP(+)) (287 aa).

Shikimate is bound by residues 20–22 (SRS) and Thr67. The active-site Proton acceptor is Lys71. Glu84 lines the NADP(+) pocket. The shikimate site is built by Asn93 and Asp108. NADP(+)-binding positions include 132–136 (GAGGA) and Met226. Tyr228 serves as a coordination point for shikimate. Gly250 lines the NADP(+) pocket.

Belongs to the shikimate dehydrogenase family. In terms of assembly, homodimer.

The enzyme catalyses shikimate + NADP(+) = 3-dehydroshikimate + NADPH + H(+). It functions in the pathway metabolic intermediate biosynthesis; chorismate biosynthesis; chorismate from D-erythrose 4-phosphate and phosphoenolpyruvate: step 4/7. In terms of biological role, involved in the biosynthesis of the chorismate, which leads to the biosynthesis of aromatic amino acids. Catalyzes the reversible NADPH linked reduction of 3-dehydroshikimate (DHSA) to yield shikimate (SA). The sequence is that of Shikimate dehydrogenase (NADP(+)) from Bordetella petrii (strain ATCC BAA-461 / DSM 12804 / CCUG 43448).